A 735-amino-acid chain; its full sequence is Catalase-peroxidase (735 aa).

The segment at residues 95 to 223 (WHSAGTYRTG…LAAVQMGLIY (129 aa)) is a cross-link (tryptophyl-tyrosyl-methioninium (Trp-Tyr) (with M-249)). The Proton acceptor role is filled by His-96. A cross-link (tryptophyl-tyrosyl-methioninium (Tyr-Met) (with W-95)) is located at residues 223–249 (YVNPEGPDGVPDPIKSGIDIRETFARM). Residue His-264 coordinates heme b.

Belongs to the peroxidase family. Peroxidase/catalase subfamily. As to quaternary structure, homodimer or homotetramer. Heme b serves as cofactor. In terms of processing, formation of the three residue Trp-Tyr-Met cross-link is important for the catalase, but not the peroxidase activity of the enzyme.

The catalysed reaction is H2O2 + AH2 = A + 2 H2O. It carries out the reaction 2 H2O2 = O2 + 2 H2O. Functionally, bifunctional enzyme with both catalase and broad-spectrum peroxidase activity. The protein is Catalase-peroxidase of Aliarcobacter butzleri (strain RM4018) (Arcobacter butzleri).